A 272-amino-acid chain; its full sequence is MTATSSSESPDPNVDVCVSIQNATISYGDFEAVKNVYCDIPRGQVTAFIGPSGCGKSTILRALNRMNDLIEGCSLKGRILFDGADLYAPEVDPVEVRRRIGMVFQQPNPFPKSIYENIAFGARINGYNGDMDELVERSLRQAAIWDECKDKLNESGNSLSGGQQQRLCIARTIAIEPEVILMDEPCSALDPISTLKIEETIHELKKSFTIVIVTHNMQQAVRVSDMTAFFNAEAVDGESGKVGYLVEFNDTDKIFNAPSQQATQDYVSGRFG.

The 240-residue stretch at Val-18–Ala-257 folds into the ABC transporter domain. Gly-50–Ser-57 provides a ligand contact to ATP.

This sequence belongs to the ABC transporter superfamily. Phosphate importer (TC 3.A.1.7) family. In terms of assembly, the complex is composed of two ATP-binding proteins (PstB), two transmembrane proteins (PstC and PstA) and a solute-binding protein (PstS).

It is found in the cell inner membrane. It catalyses the reaction phosphate(out) + ATP + H2O = ADP + 2 phosphate(in) + H(+). Its function is as follows. Part of the ABC transporter complex PstSACB involved in phosphate import. Responsible for energy coupling to the transport system. This Synechococcus sp. (strain CC9311) protein is Phosphate import ATP-binding protein PstB.